The primary structure comprises 239 residues: Probable methylthioribulose-1-phosphate dehydratase (239 aa).

Cys-100 serves as a coordination point for substrate. The Zn(2+) site is built by His-118 and His-120. Catalysis depends on Glu-141, which acts as the Proton donor/acceptor. His-197 serves as a coordination point for Zn(2+).

It belongs to the aldolase class II family. MtnB subfamily. The cofactor is Zn(2+).

The protein resides in the cytoplasm. The enzyme catalyses 5-(methylsulfanyl)-D-ribulose 1-phosphate = 5-methylsulfanyl-2,3-dioxopentyl phosphate + H2O. The protein operates within amino-acid biosynthesis; L-methionine biosynthesis via salvage pathway; L-methionine from S-methyl-5-thio-alpha-D-ribose 1-phosphate: step 2/6. In terms of biological role, catalyzes the dehydration of methylthioribulose-1-phosphate (MTRu-1-P) into 2,3-diketo-5-methylthiopentyl-1-phosphate (DK-MTP-1-P). This is Probable methylthioribulose-1-phosphate dehydratase from Leishmania major.